The chain runs to 57 residues: Small ribosomal subunit protein bS21 (57 aa).

A disordered region spans residues 32–57 (VRKRKHFEKPSVKRKKKSEAARKRKF). Positions 33 to 57 (RKRKHFEKPSVKRKKKSEAARKRKF) are enriched in basic residues.

The protein belongs to the bacterial ribosomal protein bS21 family.

This chain is Small ribosomal subunit protein bS21, found in Shouchella clausii (strain KSM-K16) (Alkalihalobacillus clausii).